The following is a 487-amino-acid chain: b(0,+)-type amino acid transporter 1 (487 aa).

The span at 1-20 shows a compositional bias: basic and acidic residues; it reads MEETSPRRRREDEKSVHSTE. The interval 1–23 is disordered; the sequence is MEETSPRRRREDEKSVHSTEPKT. At 1-31 the chain is on the cytoplasmic side; it reads MEETSPRRRREDEKSVHSTEPKTTSLQKEVG. S18 bears the Phosphoserine mark. Residues 32–55 form a helical membrane-spanning segment; sequence LLSGICIIVGTIIGSGIFISPKSV. Position 43 to 47 (43 to 47) interacts with L-arginine; that stretch reads IIGSG. Over 56–62 the chain is Extracellular; it reads LANTESV. A helical membrane pass occupies residues 63 to 84; sequence GPCLIIWAACGVLATLGALCFA. Residues 85 to 110 are Cytoplasmic-facing; sequence ELGTMITKSGGEYPYLMEAFGPIPAY. A helical membrane pass occupies residues 111-137; sequence LFSWTSLIVMKPSSFAIICLSFSEYVC. Residues 138 to 147 lie on the Extracellular side of the membrane; sequence AAFYLGCRPP. 2 helical membrane-spanning segments follow: residues 148–169 and 170–193; these read AVVV…NALS and VRLG…IIII. At 194-217 the chain is on the extracellular side; it reads SGLVLLAQGNVKNFQNSFEGSQTS. The chain crosses the membrane as a helical span at residues 218 to 238; sequence VGSISLAFYNGLWAYDGWNQL. An L-arginine-binding site is contributed by D233. Residues 239-251 are Cytoplasmic-facing; sequence NYITEELRNPYRN. Residues 252 to 274 traverse the membrane as a helical segment; sequence LPMAIVIGIPLVTVCYILMNIAY. The Extracellular portion of the chain corresponds to 275 to 302; the sequence is FTVMTPTELLQSQAVAVTFGDRVLYPAS. The helical transmembrane segment at 303-325 threads the bilayer; sequence WVVPLFVAFSTIGAANGTCFTAG. Residues 326 to 351 lie on the Cytoplasmic side of the membrane; the sequence is RLIYVAGREGHMLKVLSYISVKRLTP. 2 consecutive transmembrane segments (helical) span residues 352–370 and 371–391; these read APAL…IPGD and INSL…MTIL. Residues 392 to 410 lie on the Cytoplasmic side of the membrane; it reads GLVVMRFTRKDLERPIKVP. Residues 411-431 form a helical membrane-spanning segment; that stretch reads IFIPIIVILVSVFLILAPIIS. Residues 432–434 are Extracellular-facing; that stretch reads SPA. Residues 435 to 450 traverse the membrane as a helical segment; that stretch reads WEYLYCVLFILSGLIF. Over 451-487 the chain is Cytoplasmic; the sequence is YFLFVHYKFRWAQKISRPITKHLQMLMEVVPPEKDPE.

It belongs to the amino acid-polyamine-organocation (APC) superfamily. As to quaternary structure, disulfide-linked heterodimer composed of the catalytic light chain subunit SLC7A9 and the heavy chain subunit SLC3A1. The heterodimer is the minimal functional unit. Assembles in heterotetramers (dimers of heterodimers) and higher order oligomers; the oligomerization is mediated by SLC3A1 likely to prevent degradation and facilitate heteromer trafficking to the plasma membrane. Interacts with CAV1. As to expression, outer medulla of kidney (at protein level). Kidney and small intestine. In the kidney localized to the apical membrane of the proximal tubules.

Its subcellular location is the apical cell membrane. It catalyses the reaction L-leucine(out) + L-arginine(in) = L-leucine(in) + L-arginine(out). It carries out the reaction L-histidine(out) + L-arginine(in) = L-histidine(in) + L-arginine(out). The catalysed reaction is L-arginine(in) + L-phenylalanine(out) = L-arginine(out) + L-phenylalanine(in). The enzyme catalyses L-cysteine(out) + L-arginine(in) = L-cysteine(in) + L-arginine(out). It catalyses the reaction L-cystine(out) + L-arginine(in) = L-cystine(in) + L-arginine(out). It carries out the reaction L-lysine(out) + L-arginine(in) = L-lysine(in) + L-arginine(out). In terms of biological role, associates with SLC3A1 to form a functional transporter complex that mediates the electrogenic exchange between cationic amino acids and neutral amino acids, with a stoichiometry of 1:1. Has system b(0,+)-like activity with high affinity for extracellular cationic amino acids and L-cystine and lower affinity for intracellular neutral amino acids. Substrate exchange is driven by high concentration of intracellular neutral amino acids and the intracellular reduction of L-cystine to L-cysteine. Required for reabsorption of L-cystine and dibasic amino acids across the brush border membrane in renal proximal tubules. The polypeptide is b(0,+)-type amino acid transporter 1 (Slc7a9) (Rattus norvegicus (Rat)).